A 345-amino-acid chain; its full sequence is Phosphate acyltransferase (345 aa).

The protein belongs to the PlsX family. In terms of assembly, homodimer. Probably interacts with PlsY.

It is found in the cytoplasm. It carries out the reaction a fatty acyl-[ACP] + phosphate = an acyl phosphate + holo-[ACP]. The protein operates within lipid metabolism; phospholipid metabolism. In terms of biological role, catalyzes the reversible formation of acyl-phosphate (acyl-PO(4)) from acyl-[acyl-carrier-protein] (acyl-ACP). This enzyme utilizes acyl-ACP as fatty acyl donor, but not acyl-CoA. The sequence is that of Phosphate acyltransferase from Wolbachia pipientis wMel.